The sequence spans 302 residues: Light-independent protochlorophyllide reductase iron-sulfur ATP-binding protein (302 aa).

Over residues 1–10 (MSTATISPSQ) the composition is skewed to polar residues. A disordered region spans residues 1–21 (MSTATISPSQIGRGARPDGEG). Residues 46–51 (GIGKST) and Lys-75 contribute to the ATP site. Residue Ser-50 coordinates Mg(2+). 2 residues coordinate [4Fe-4S] cluster: Cys-131 and Cys-165. Residues 216-217 (NR) and 240-242 (PAL) contribute to the ATP site.

The protein belongs to the NifH/BchL/ChlL family. As to quaternary structure, homodimer. Protochlorophyllide reductase is composed of three subunits; BchL, BchN and BchB. [4Fe-4S] cluster is required as a cofactor.

The enzyme catalyses chlorophyllide a + oxidized 2[4Fe-4S]-[ferredoxin] + 2 ADP + 2 phosphate = protochlorophyllide a + reduced 2[4Fe-4S]-[ferredoxin] + 2 ATP + 2 H2O. It participates in porphyrin-containing compound metabolism; bacteriochlorophyll biosynthesis (light-independent). In terms of biological role, component of the dark-operative protochlorophyllide reductase (DPOR) that uses Mg-ATP and reduced ferredoxin to reduce ring D of protochlorophyllide (Pchlide) to form chlorophyllide a (Chlide). This reaction is light-independent. The L component serves as a unique electron donor to the NB-component of the complex, and binds Mg-ATP. The protein is Light-independent protochlorophyllide reductase iron-sulfur ATP-binding protein of Rubrivivax gelatinosus (strain NBRC 100245 / IL144).